Reading from the N-terminus, the 468-residue chain is Glutamate--tRNA ligase (468 aa).

Residues 12–22 carry the 'HIGH' region motif; sequence PSPTGFIHLGN. The short motif at 244 to 248 is the 'KMSKS' region element; it reads KMSKR. K247 serves as a coordination point for ATP.

The protein belongs to the class-I aminoacyl-tRNA synthetase family. Glutamate--tRNA ligase type 1 subfamily. In terms of assembly, monomer.

It is found in the cytoplasm. It carries out the reaction tRNA(Glu) + L-glutamate + ATP = L-glutamyl-tRNA(Glu) + AMP + diphosphate. Its function is as follows. Catalyzes the attachment of glutamate to tRNA(Glu) in a two-step reaction: glutamate is first activated by ATP to form Glu-AMP and then transferred to the acceptor end of tRNA(Glu). In Polynucleobacter necessarius subsp. necessarius (strain STIR1), this protein is Glutamate--tRNA ligase.